The primary structure comprises 504 residues: Apolipoprotein N-acyltransferase (504 aa).

Transmembrane regions (helical) follow at residues 6–26 (LALT…YALV), 47–67 (ALYG…WVFV), 83–103 (LTAL…WLGV), 105–125 (AGGG…WVVT), 153–173 (IAPV…AGLL), and 186–206 (FALL…KVQW). Positions 219 to 457 (LQGNVPQDQK…REALTGMMQP (239 aa)) constitute a CN hydrolase domain. Catalysis depends on E258, which acts as the Proton acceptor. K317 is a catalytic residue. C369 (nucleophile) is an active-site residue. The helical transmembrane segment at 465–485 (ALWGDWPAIGLCAGIVGICFA) threads the bilayer.

Belongs to the CN hydrolase family. Apolipoprotein N-acyltransferase subfamily.

The protein localises to the cell inner membrane. It catalyses the reaction N-terminal S-1,2-diacyl-sn-glyceryl-L-cysteinyl-[lipoprotein] + a glycerophospholipid = N-acyl-S-1,2-diacyl-sn-glyceryl-L-cysteinyl-[lipoprotein] + a 2-acyl-sn-glycero-3-phospholipid + H(+). The protein operates within protein modification; lipoprotein biosynthesis (N-acyl transfer). Its function is as follows. Catalyzes the phospholipid dependent N-acylation of the N-terminal cysteine of apolipoprotein, the last step in lipoprotein maturation. The sequence is that of Apolipoprotein N-acyltransferase from Methylococcus capsulatus (strain ATCC 33009 / NCIMB 11132 / Bath).